Reading from the N-terminus, the 184-residue chain is Zinc metalloproteinase-disintegrin-like ammodytagin (184 aa).

Positions 1-90 (KSAAXVTLDL…CPAKCIDNKP (90 aa)) constitute a Peptidase M12B domain. D20 is a Ca(2+) binding site. H64 contacts Zn(2+). Residue E65 is part of the active site. H68 and H74 together coordinate Zn(2+). N88, V100, N103, F105, and E107 together coordinate Ca(2+). The Disintegrin domain maps to 98 to 124 (PAVCGNYFVELTPGSQCADGVCCDQCR). 2 disulfides stabilise this stretch: C114–C120 and C165–C177.

The protein belongs to the venom metalloproteinase (M12B) family. P-III subfamily. P-IIIc sub-subfamily. In terms of assembly, heterodimer; disulfide-linked. It depends on Zn(2+) as a cofactor. The N-terminus is blocked. In terms of processing, N-glycosylated. In terms of tissue distribution, expressed by the venom gland.

It is found in the secreted. With respect to regulation, inhibited by EDTA, DTT and zinc ions. Partially inhibited by L-cysteine. Not inhibited by 2-propanol or PMSF. Activity is enhanced by calcium or magnesium ions. Snake venom zinc metalloprotease that has fibrinogenolytic and hemorrhagic activities in mouse and rats. Hydrolyzes the Aalpha-chain (FGA) and more slowly the Bbeta-chain of fibrinogen (FGB), without affecting the gamma-chain. Its hemorrhagic activity results of its involvement in cleavage of basal membrane components (nidogen and fibronectin but not laminin) and depletion of fibrinogen, prothrombin (F2) and factor X (F10) in blood circulation. Also possess potent azocaseinolytic activity and cleaves insulin B-chain, hydrolyzing it at positions Gln(4)-His(5), His(10)-Leu(11) and Tyr(16)-Leu(17). The chain is Zinc metalloproteinase-disintegrin-like ammodytagin from Vipera ammodytes ammodytes (Western sand viper).